A 38-amino-acid chain; its full sequence is Cytochrome b6-f complex subunit 5 (38 aa).

A helical transmembrane segment spans residues 5–25 (LLLGIVLGLIPITLAGLFVAA).

This sequence belongs to the PetG family. The 4 large subunits of the cytochrome b6-f complex are cytochrome b6, subunit IV (17 kDa polypeptide, PetD), cytochrome f and the Rieske protein, while the 4 small subunits are PetG, PetL, PetM and PetN. The complex functions as a dimer.

Its subcellular location is the cellular thylakoid membrane. Component of the cytochrome b6-f complex, which mediates electron transfer between photosystem II (PSII) and photosystem I (PSI), cyclic electron flow around PSI, and state transitions. PetG is required for either the stability or assembly of the cytochrome b6-f complex. The polypeptide is Cytochrome b6-f complex subunit 5 (Crocosphaera subtropica (strain ATCC 51142 / BH68) (Cyanothece sp. (strain ATCC 51142))).